The chain runs to 142 residues: Protein archease (142 aa).

The Ca(2+) site is built by Asp12, Asp141, and Leu142.

Belongs to the archease family.

In terms of biological role, activates the tRNA-splicing ligase complex by facilitating the enzymatic turnover of catalytic subunit RtcB. Acts by promoting the guanylylation of RtcB, a key intermediate step in tRNA ligation. Can also alter the NTP specificity of RtcB such that ATP, dGTP or ITP is used efficiently. This chain is Protein archease, found in Thermococcus gammatolerans (strain DSM 15229 / JCM 11827 / EJ3).